Consider the following 837-residue polypeptide: WW domain-containing protein tag-325 (837 aa).

Over residues 1–11 (MTTAVQPSDTT) the composition is skewed to polar residues. The interval 1–66 (MTTAVQPSDT…SNGQNYADDP (66 aa)) is disordered. Residues 33-43 (SESAESSSSSS) show a composition bias toward low complexity. The span at 44–61 (QTNVSAANTLPRESNGQN) shows a compositional bias: polar residues. Residues 96-129 (RDLLNGWFEYETDVGRTFFFNKETGKSQWIPPRF) form the WW domain. The span at 150-161 (TCSFQGSSTSSS) shows a compositional bias: low complexity. Disordered regions lie at residues 150–181 (TCSF…RKSQ), 194–257 (DDVD…STAS), 338–403 (TTSS…EPAE), 548–574 (MRRR…EPRP), and 778–800 (KNKK…TPVQ). Residues 162–181 (EEQKENKMRESLADDDRKSQ) are compositionally biased toward basic and acidic residues. Positions 247–257 (PTSSRKASTAS) are enriched in polar residues. Basic and acidic residues predominate over residues 371–403 (RCEERRGSGDGREPVRTIRCGDLERSENDEPAE). A PH domain is found at 386–505 (RTIRCGDLER…WYKSLEEVVA (120 aa)). Residues 556-569 (SQSAIETVSTSVST) are compositionally biased toward polar residues. In terms of domain architecture, Rho-GAP spans 610-827 (STLSAICQHE…YLLESANKFD (218 aa)). Positions 778 to 788 (KNKKAGKKAKP) are enriched in basic residues.

This Caenorhabditis elegans protein is WW domain-containing protein tag-325 (tag-325).